Reading from the N-terminus, the 134-residue chain is Proline-rich protein 4 (134 aa).

Positions Met1–Ala16 are cleaved as a signal peptide. The tract at residues Phe28–Trp134 is disordered. Over residues Gln47–Pro59 the composition is skewed to pro residues. Polar residues predominate over residues Val110–Phe119. The span at Gln120 to Trp134 shows a compositional bias: basic and acidic residues.

In terms of tissue distribution, abundantly expressed in lacrimal gland where it is found in the acinar cells but not in the intralobular ducts. Also found in the submandibular gland, the parotid and sublingual glands.

The protein resides in the secreted. The protein is Proline-rich protein 4 (PRR4) of Homo sapiens (Human).